The primary structure comprises 257 residues: tRNA pseudouridine synthase A (257 aa).

Catalysis depends on Asp53, which acts as the Nucleophile. Tyr111 is a binding site for substrate.

It belongs to the tRNA pseudouridine synthase TruA family. As to quaternary structure, homodimer.

It catalyses the reaction uridine(38/39/40) in tRNA = pseudouridine(38/39/40) in tRNA. Formation of pseudouridine at positions 38, 39 and 40 in the anticodon stem and loop of transfer RNAs. The protein is tRNA pseudouridine synthase A of Xanthomonas oryzae pv. oryzae (strain MAFF 311018).